Consider the following 465-residue polypeptide: 3-isopropylmalate dehydratase large subunit (465 aa).

Residues Cys-347, Cys-407, and Cys-410 each coordinate [4Fe-4S] cluster. The segment at Asp-416–His-443 is disordered.

This sequence belongs to the aconitase/IPM isomerase family. LeuC type 1 subfamily. Heterodimer of LeuC and LeuD. [4Fe-4S] cluster serves as cofactor.

It carries out the reaction (2R,3S)-3-isopropylmalate = (2S)-2-isopropylmalate. The protein operates within amino-acid biosynthesis; L-leucine biosynthesis; L-leucine from 3-methyl-2-oxobutanoate: step 2/4. Functionally, catalyzes the isomerization between 2-isopropylmalate and 3-isopropylmalate, via the formation of 2-isopropylmaleate. The polypeptide is 3-isopropylmalate dehydratase large subunit (Frankia casuarinae (strain DSM 45818 / CECT 9043 / HFP020203 / CcI3)).